A 173-amino-acid chain; its full sequence is Peptidoglycan-associated lipoprotein (173 aa).

The first 21 residues, 1 to 21, serve as a signal peptide directing secretion; that stretch reads MKSKKIFKILTLLLPMITTFS. C22 carries the N-palmitoyl cysteine lipid modification. C22 is lipidated: S-diacylglycerol cysteine. Positions 59-173 constitute an OmpA-like domain; the sequence is ETLEKLKKGN…KNRRSVIIYQ (115 aa).

This sequence belongs to the Pal lipoprotein family.

Its subcellular location is the cell outer membrane. This is Peptidoglycan-associated lipoprotein from Buchnera aphidicola subsp. Baizongia pistaciae (strain Bp).